The primary structure comprises 261 residues: Putative diacylated glycolipid transporter LprF (261 aa).

A signal peptide spans 1 to 38 (MNGLISQACGSHRPRRPSSLGAVAILIAATLFATVVAG). Cys39 is lipidated: N-palmitoyl cysteine. The S-diacylglycerol cysteine moiety is linked to residue Cys39. The segment at 42–61 (KPTTASSPSPGSPSPEAQQI) is disordered.

The protein belongs to the LppX/LprAFG lipoprotein family. In terms of assembly, monomer. In terms of processing, modified by Lgt on Cys-39 with an S-linked diacylglycerol with a mixture of C16, C18 and C19 fatty acids (palmitic, stearic and tuberculostearic acid respectively), signal peptide is removed by LspA, modified by Lnt with an amide-linked mixture of C16 and C19 fatty acids.

The protein localises to the cell membrane. Might be involved in transporting short diacylated glycolipids to the cell outer membrane. Binds glycolipids that contain a diacylated glycerophosphate or a diacylated phosphatidylinositol moiety with C14 and C16 chains (upon overexpression in M.smegmatis; M.smegmatis does not encode this gene). Overexpression in M.smegmatis increases the cell wall glycolipid LAM/LM ratio (lipoarabinomannan/lipomannan), suggesting perhaps this protein is involved in the preferential translocation of diacylated LAM to the outer cell membrane. Overexpressing M.smegmatis cells adhere less well to hexadecane droplets, indicating decrease in the hydrophobicity of the cell surface, and have a slightly increased resistance to the antibiotic ethambutol. In Mycobacterium bovis (strain ATCC BAA-935 / AF2122/97), this protein is Putative diacylated glycolipid transporter LprF (lprF).